A 134-amino-acid chain; its full sequence is MILACDVGLKRIGIAVLLNGVILPLEAILRHNRNQASRDLNDLLREKNIQVLVVGKPNESYADTNARIEHFIKLLDFKGEIVFINEDRSSIEAYENLGHLGKKNKRLAIKDGRLDSLSACGILERYCQQVLKNR.

This sequence belongs to the YqgF nuclease family.

Its subcellular location is the cytoplasm. Its function is as follows. Could be a nuclease involved in processing of the 5'-end of pre-16S rRNA. This chain is Putative pre-16S rRNA nuclease, found in Helicobacter pylori (strain Shi470).